Here is a 465-residue protein sequence, read N- to C-terminus: CUGBP Elav-like family member 3 (465 aa).

RRM domains follow at residues 7 to 88 and 95 to 174; these read IKLF…PADS and KLFV…FADT. Disordered stretches follow at residues 283–311 and 345–379; these read PVPT…QSPA and PPAL…GPDG. A compositionally biased stretch (pro residues) spans 345–358; it reads PPALVAQQPPPPPQ. Residues 359–373 show a composition bias toward low complexity; the sequence is QQQQQQQQQQQQQQQ. Residues 380–458 enclose the RRM 3 domain; that stretch reads CNIFIYHLPQ…KRLKVQLKRP (79 aa).

The protein belongs to the CELF/BRUNOL family.

The protein localises to the nucleus. It localises to the cytoplasm. Its function is as follows. RNA-binding protein involved in the regulation of pre-mRNA alternative splicing. Mediates exon inclusion and/or exclusion in pre-mRNA that are subject to tissue-specific and developmentally regulated alternative splicing. Specifically activates exon 5 inclusion of cardiac isoforms of TNNT2 during heart remodeling at the juvenile to adult transition. Activates the splicing of MAPT/Tau exon 10. Binds to muscle-specific splicing enhancer (MSE) intronic sites flanking the alternative exon 5 of TNNT2 pre-mRNA. The chain is CUGBP Elav-like family member 3 (Celf3) from Mus musculus (Mouse).